The primary structure comprises 220 residues: Ribonuclease HII (220 aa).

Residues 32 to 220 (KHIAGIDEAG…FAPIKGCFDC (189 aa)) form the RNase H type-2 domain. The a divalent metal cation site is built by Asp-38, Glu-39, and Asp-130.

The protein belongs to the RNase HII family. It depends on Mn(2+) as a cofactor. Requires Mg(2+) as cofactor.

The protein resides in the cytoplasm. The catalysed reaction is Endonucleolytic cleavage to 5'-phosphomonoester.. Endonuclease that specifically degrades the RNA of RNA-DNA hybrids. The polypeptide is Ribonuclease HII (Brucella abortus (strain 2308)).